The sequence spans 255 residues: Syntaxin-23 (255 aa).

Positions 1 to 31 (MSFQDLEAGRGRSLASSRNINGGGSRQDTTQ) are disordered. At serine 2 the chain carries N-acetylserine. Positions 14–31 (LASSRNINGGGSRQDTTQ) are enriched in polar residues. In terms of domain architecture, t-SNARE coiled-coil homology spans 184-246 (EAVIEEREQG…AQGKSHLVRH (63 aa)).

The protein belongs to the syntaxin family. In terms of assembly, part of the t-SNARE complex. Interacts with RGS1. Expressed at higher levels in leaves, flowers and stems than in roots.

It is found in the membrane. Functionally, may function in the docking or fusion of transport vesicles with the prevacuolar membrane. The polypeptide is Syntaxin-23 (SYP23) (Arabidopsis thaliana (Mouse-ear cress)).